A 911-amino-acid chain; its full sequence is Probable dipeptidyl-aminopeptidase B (911 aa).

Positions 1–39 are disordered; it reads MPRPRAAKEEETELLAQHQESPRPSSDGSEASASSISTT. The Cytoplasmic segment spans residues 1-97; that stretch reads MPRPRAAKEE…TPVDKKARRT (97 aa). The span at 25–39 shows a compositional bias: low complexity; that stretch reads SSDGSEASASSISTT. A helical; Signal-anchor for type II membrane protein transmembrane segment spans residues 98–118; the sequence is LWIVGTICAVGWALALVSFLM. Over 119-911 the chain is Vacuolar; that stretch reads NGNYKHSSTR…AQADARSLGR (793 aa). N-linked (GlcNAc...) asparagine glycosylation is found at Asn-268 and Asn-564. Catalysis depends on Ser-755, which acts as the Charge relay system. Asn-809 is a glycosylation site (N-linked (GlcNAc...) asparagine). Active-site charge relay system residues include Asp-832 and His-865.

It belongs to the peptidase S9B family.

It is found in the vacuole membrane. It carries out the reaction Release of an N-terminal dipeptide, Xaa-Yaa-|-Zaa-, from a polypeptide, preferentially when Yaa is Pro, provided Zaa is neither Pro nor hydroxyproline.. Type IV dipeptidyl-peptidase which removes N-terminal dipeptides sequentially from polypeptides having unsubstituted N-termini provided that the penultimate residue is proline. This is Probable dipeptidyl-aminopeptidase B (DAPB) from Phaeosphaeria nodorum (strain SN15 / ATCC MYA-4574 / FGSC 10173) (Glume blotch fungus).